The chain runs to 33 residues: Photosystem II reaction center protein Psb30 (33 aa).

A helical transmembrane segment spans residues 5–25 (VLAQLTVLTLIVISGPLVIAL).

It belongs to the Psb30/Ycf12 family. As to quaternary structure, PSII is composed of 1 copy each of membrane proteins PsbA, PsbB, PsbC, PsbD, PsbE, PsbF, PsbH, PsbI, PsbJ, PsbK, PsbL, PsbM, PsbT, PsbX, PsbY, PsbZ, Psb30/Ycf12, peripheral proteins of the oxygen-evolving complex and a large number of cofactors. It forms dimeric complexes.

It localises to the plastid. Its subcellular location is the chloroplast thylakoid membrane. Functionally, a core subunit of photosystem II (PSII), probably helps stabilize the reaction center. The protein is Photosystem II reaction center protein Psb30 of Cycas taitungensis (Prince sago).